A 353-amino-acid chain; its full sequence is Putative glycosyltransferase TagX (353 aa).

Belongs to the glycosyltransferase 2 family.

This is Putative glycosyltransferase TagX (tagX) from Staphylococcus aureus (strain MRSA252).